The chain runs to 141 residues: Ribosome maturation factor RimP (141 aa).

Belongs to the RimP family.

Its subcellular location is the cytoplasm. In terms of biological role, required for maturation of 30S ribosomal subunits. The chain is Ribosome maturation factor RimP from Laribacter hongkongensis (strain HLHK9).